The primary structure comprises 388 residues: Alanine racemase, catabolic (388 aa).

The active-site Proton acceptor; specific for D-alanine is lysine 46. Lysine 46 carries the N6-(pyridoxal phosphate)lysine modification. Arginine 145 is a binding site for substrate. Catalysis depends on tyrosine 267, which acts as the Proton acceptor; specific for L-alanine. Methionine 315 serves as a coordination point for substrate.

The protein belongs to the alanine racemase family. It depends on pyridoxal 5'-phosphate as a cofactor.

It carries out the reaction L-alanine = D-alanine. Its function is as follows. Isomerizes L-alanine to D-alanine which is then oxidized to pyruvate by DadA. This is Alanine racemase, catabolic (dadB) from Agrobacterium fabrum (strain C58 / ATCC 33970) (Agrobacterium tumefaciens (strain C58)).